Here is an 805-residue protein sequence, read N- to C-terminus: ATP-dependent RNA helicase mak-5 (805 aa).

The segment covering 1–10 has biased composition (basic residues); the sequence is MAVDKKRKNT. Disordered stretches follow at residues 1–33 and 79–189; these read MAVDKKRKNTKAPASGPKRRKTQPSSKQIKRPV and VPKS…ELET. Residues 85–100 are compositionally biased toward acidic residues; it reads EVEDDGEEFGGFDDEE. Composition is skewed to basic and acidic residues over residues 110 to 119, 126 to 143, and 164 to 189; these read QEVKTSETKA, AKEKKASKDQRKPKEQQK, and KNAEDKKKARKNEKTTVEPKDPELET. The short motif at 209–237 is the Q motif element; that stretch reads SEWVPLDLSPRMISSIAKLRFSKPTVIQS. One can recognise a Helicase ATP-binding domain in the interval 240–463; sequence IPEIMAGHDV…AGKSKFKATS (224 aa). 253–260 lines the ATP pocket; sequence ASTGSGKT. The DEAD box signature appears at 372 to 375; the sequence is DEAD. Over residues 390-406 the composition is skewed to basic and acidic residues; the sequence is FKALDRPPVEENNEDQK. A disordered region spans residues 390–435; the sequence is FKALDRPPVEENNEDQKMGGTDEEGQEEEEEDSEEEEEEEEEHVNK. Residues 410-431 show a composition bias toward acidic residues; sequence TDEEGQEEEEEDSEEEEEEEEE. In terms of domain architecture, Helicase C-terminal spans 510-666; the sequence is YLYATLMLQP…NSGNNTKKLV (157 aa). Residues 729–751 form a disordered region; the sequence is AGKWGGKGSSKKQKQKEAQQMSK.

This sequence belongs to the DEAD box helicase family. DDX24/MAK5 subfamily.

The protein localises to the nucleus. It is found in the nucleolus. The catalysed reaction is ATP + H2O = ADP + phosphate + H(+). Functionally, ATP-binding RNA helicase involved in the biogenesis of 60S ribosomal subunits and is required for the normal formation of 25S and 5.8S rRNAs. The polypeptide is ATP-dependent RNA helicase mak-5 (mak-5) (Neurospora crassa (strain ATCC 24698 / 74-OR23-1A / CBS 708.71 / DSM 1257 / FGSC 987)).